Consider the following 101-residue polypeptide: Urease subunit beta (101 aa).

It belongs to the urease beta subunit family. As to quaternary structure, heterotrimer of UreA (gamma), UreB (beta) and UreC (alpha) subunits. Three heterotrimers associate to form the active enzyme.

The protein localises to the cytoplasm. It carries out the reaction urea + 2 H2O + H(+) = hydrogencarbonate + 2 NH4(+). It participates in nitrogen metabolism; urea degradation; CO(2) and NH(3) from urea (urease route): step 1/1. This Rhizobium leguminosarum bv. trifolii (strain WSM2304) protein is Urease subunit beta.